The chain runs to 396 residues: S-adenosylmethionine synthase (396 aa).

Residue His16 participates in ATP binding. Mg(2+) is bound at residue Asp18. Glu44 is a binding site for K(+). Residues Glu57 and Gln100 each contribute to the L-methionine site. The flexible loop stretch occupies residues 100–110 (QSVDIAQGVDR). Residues 165 to 167 (DAK), Asp240, 246 to 247 (RK), Ala263, and Lys267 each bind ATP. Asp240 contacts L-methionine. Residue Lys271 coordinates L-methionine.

Belongs to the AdoMet synthase family. In terms of assembly, homotetramer; dimer of dimers. The cofactor is Mg(2+). Requires K(+) as cofactor.

Its subcellular location is the cytoplasm. The enzyme catalyses L-methionine + ATP + H2O = S-adenosyl-L-methionine + phosphate + diphosphate. It functions in the pathway amino-acid biosynthesis; S-adenosyl-L-methionine biosynthesis; S-adenosyl-L-methionine from L-methionine: step 1/1. Its function is as follows. Catalyzes the formation of S-adenosylmethionine (AdoMet) from methionine and ATP. The overall synthetic reaction is composed of two sequential steps, AdoMet formation and the subsequent tripolyphosphate hydrolysis which occurs prior to release of AdoMet from the enzyme. In Pseudomonas savastanoi pv. phaseolicola (strain 1448A / Race 6) (Pseudomonas syringae pv. phaseolicola (strain 1448A / Race 6)), this protein is S-adenosylmethionine synthase.